Reading from the N-terminus, the 266-residue chain is Electron transfer flavoprotein subunit beta (266 aa).

The protein belongs to the ETF beta-subunit/FixA family. As to quaternary structure, heterodimer of an alpha and a beta subunit. It depends on FAD as a cofactor. AMP serves as cofactor.

The electron transfer flavoprotein serves as a specific electron acceptor for other dehydrogenases. It transfers the electrons to the main respiratory chain via ETF-ubiquinone oxidoreductase (ETF dehydrogenase). This Mycobacterium bovis (strain ATCC BAA-935 / AF2122/97) protein is Electron transfer flavoprotein subunit beta (etfB).